We begin with the raw amino-acid sequence, 394 residues long: Argininosuccinate synthase (394 aa).

8–16 (AYSGGLDTS) lines the ATP pocket. The L-citrulline site is built by Y86 and S91. G116 contributes to the ATP binding site. L-aspartate-binding residues include T118, N122, and D123. Residue N122 participates in L-citrulline binding. L-citrulline-binding residues include R126, S172, S181, E256, and Y268.

This sequence belongs to the argininosuccinate synthase family. Type 1 subfamily. As to quaternary structure, homotetramer.

The protein resides in the cytoplasm. It catalyses the reaction L-citrulline + L-aspartate + ATP = 2-(N(omega)-L-arginino)succinate + AMP + diphosphate + H(+). Its pathway is amino-acid biosynthesis; L-arginine biosynthesis; L-arginine from L-ornithine and carbamoyl phosphate: step 2/3. In Methanococcoides burtonii (strain DSM 6242 / NBRC 107633 / OCM 468 / ACE-M), this protein is Argininosuccinate synthase.